Here is a 283-residue protein sequence, read N- to C-terminus: Bifunctional protein FolD (283 aa).

NADP(+) contacts are provided by residues 165-167 (GAS), Ser190, and Ile231.

Belongs to the tetrahydrofolate dehydrogenase/cyclohydrolase family. Homodimer.

It catalyses the reaction (6R)-5,10-methylene-5,6,7,8-tetrahydrofolate + NADP(+) = (6R)-5,10-methenyltetrahydrofolate + NADPH. The catalysed reaction is (6R)-5,10-methenyltetrahydrofolate + H2O = (6R)-10-formyltetrahydrofolate + H(+). It functions in the pathway one-carbon metabolism; tetrahydrofolate interconversion. Its function is as follows. Catalyzes the oxidation of 5,10-methylenetetrahydrofolate to 5,10-methenyltetrahydrofolate and then the hydrolysis of 5,10-methenyltetrahydrofolate to 10-formyltetrahydrofolate. The polypeptide is Bifunctional protein FolD (Bordetella bronchiseptica (strain ATCC BAA-588 / NCTC 13252 / RB50) (Alcaligenes bronchisepticus)).